The chain runs to 439 residues: Proline--tRNA ligase (439 aa).

The protein belongs to the class-II aminoacyl-tRNA synthetase family. ProS type 2 subfamily. In terms of assembly, homodimer.

The protein localises to the cytoplasm. The enzyme catalyses tRNA(Pro) + L-proline + ATP = L-prolyl-tRNA(Pro) + AMP + diphosphate. Its function is as follows. Catalyzes the attachment of proline to tRNA(Pro) in a two-step reaction: proline is first activated by ATP to form Pro-AMP and then transferred to the acceptor end of tRNA(Pro). This is Proline--tRNA ligase from Bradyrhizobium diazoefficiens (strain JCM 10833 / BCRC 13528 / IAM 13628 / NBRC 14792 / USDA 110).